A 370-amino-acid polypeptide reads, in one-letter code: Anthranilate phosphoribosyltransferase (370 aa).

5-phospho-alpha-D-ribose 1-diphosphate is bound by residues G82, G85 to D86, T90, N92 to T95, K110 to S118, and S122. G82 contributes to the anthranilate binding site. S94 provides a ligand contact to Mg(2+). N113 lines the anthranilate pocket. R168 serves as a coordination point for anthranilate. Mg(2+)-binding residues include D226 and E227.

It belongs to the anthranilate phosphoribosyltransferase family. As to quaternary structure, homodimer. Mg(2+) serves as cofactor.

It catalyses the reaction N-(5-phospho-beta-D-ribosyl)anthranilate + diphosphate = 5-phospho-alpha-D-ribose 1-diphosphate + anthranilate. Its pathway is amino-acid biosynthesis; L-tryptophan biosynthesis; L-tryptophan from chorismate: step 2/5. Its function is as follows. Catalyzes the transfer of the phosphoribosyl group of 5-phosphorylribose-1-pyrophosphate (PRPP) to anthranilate to yield N-(5'-phosphoribosyl)-anthranilate (PRA). The protein is Anthranilate phosphoribosyltransferase of Methanosarcina acetivorans (strain ATCC 35395 / DSM 2834 / JCM 12185 / C2A).